Here is a 511-residue protein sequence, read N- to C-terminus: Light-independent protochlorophyllide reductase subunit B (511 aa).

Residue aspartate 36 coordinates [4Fe-4S] cluster. Residue aspartate 299 is the Proton donor of the active site. 434 to 435 (GM) is a substrate binding site.

Belongs to the ChlB/BchB/BchZ family. In terms of assembly, protochlorophyllide reductase is composed of three subunits; ChlL, ChlN and ChlB. Forms a heterotetramer of two ChlB and two ChlN subunits. The cofactor is [4Fe-4S] cluster.

The protein resides in the plastid. It localises to the chloroplast. The catalysed reaction is chlorophyllide a + oxidized 2[4Fe-4S]-[ferredoxin] + 2 ADP + 2 phosphate = protochlorophyllide a + reduced 2[4Fe-4S]-[ferredoxin] + 2 ATP + 2 H2O. It functions in the pathway porphyrin-containing compound metabolism; chlorophyll biosynthesis (light-independent). In terms of biological role, component of the dark-operative protochlorophyllide reductase (DPOR) that uses Mg-ATP and reduced ferredoxin to reduce ring D of protochlorophyllide (Pchlide) to form chlorophyllide a (Chlide). This reaction is light-independent. The NB-protein (ChlN-ChlB) is the catalytic component of the complex. This is Light-independent protochlorophyllide reductase subunit B from Huperzia lucidula (Shining clubmoss).